We begin with the raw amino-acid sequence, 357 residues long: MSKQILILPGDGIGPEIMAEAVKVLKRIDAQHGLGFQLVYDELGGTAYDKYGSPLADETLERARGADAVLLGAVGGPQWDTIDPALRPERGLLKIRSQLGLFANLRPALLYPQLADASTLKPEVVAGLDLLILRELTGGIYFGQPRGNRTLDNGERQAYDTLPYSESEIRRIAKAGFDMARLRGKKLCSVDKANVLASSQLWRAVVEEVAKDYPDIALSHMYVDNAAMQLVRAPKQFDVIVTDNMFGDILSDQASMLTGSIGMLPSASLDANSKGMYEPCHGSAPDIAGKGIANPLATILSVAMMLRYTFARATAADAIEHAVGKVLDQGLRTADIWSEGTTKVGTVAMGDAVVAAL.

76 to 89 (GPQWDTIDPALRPE) lines the NAD(+) pocket. Substrate-binding residues include R96, R106, R134, and D224. Residues D224, D248, and D252 each coordinate Mg(2+). Residue 282–294 (GSAPDIAGKGIAN) participates in NAD(+) binding.

It belongs to the isocitrate and isopropylmalate dehydrogenases family. LeuB type 1 subfamily. Homodimer. It depends on Mg(2+) as a cofactor. Requires Mn(2+) as cofactor.

The protein localises to the cytoplasm. It catalyses the reaction (2R,3S)-3-isopropylmalate + NAD(+) = 4-methyl-2-oxopentanoate + CO2 + NADH. Its pathway is amino-acid biosynthesis; L-leucine biosynthesis; L-leucine from 3-methyl-2-oxobutanoate: step 3/4. Catalyzes the oxidation of 3-carboxy-2-hydroxy-4-methylpentanoate (3-isopropylmalate) to 3-carboxy-4-methyl-2-oxopentanoate. The product decarboxylates to 4-methyl-2 oxopentanoate. The sequence is that of 3-isopropylmalate dehydrogenase from Xanthomonas axonopodis pv. citri (strain 306).